The primary structure comprises 388 residues: Succinate--CoA ligase [ADP-forming] subunit beta (388 aa).

The 236-residue stretch at 9–244 folds into the ATP-grasp domain; it reads KEIFRSMGVA…LEEEDPKEIE (236 aa). Residues K46, 53 to 55, E99, C102, and E107 contribute to the ATP site; that span reads GRG. Mg(2+) is bound by residues N199 and D213. Substrate-binding positions include N264 and 321 to 323; that span reads GIM.

It belongs to the succinate/malate CoA ligase beta subunit family. As to quaternary structure, heterotetramer of two alpha and two beta subunits. It depends on Mg(2+) as a cofactor.

It carries out the reaction succinate + ATP + CoA = succinyl-CoA + ADP + phosphate. It catalyses the reaction GTP + succinate + CoA = succinyl-CoA + GDP + phosphate. It functions in the pathway carbohydrate metabolism; tricarboxylic acid cycle; succinate from succinyl-CoA (ligase route): step 1/1. Functionally, succinyl-CoA synthetase functions in the citric acid cycle (TCA), coupling the hydrolysis of succinyl-CoA to the synthesis of either ATP or GTP and thus represents the only step of substrate-level phosphorylation in the TCA. The beta subunit provides nucleotide specificity of the enzyme and binds the substrate succinate, while the binding sites for coenzyme A and phosphate are found in the alpha subunit. This chain is Succinate--CoA ligase [ADP-forming] subunit beta, found in Staphylococcus aureus (strain Mu3 / ATCC 700698).